The sequence spans 561 residues: Acylcarnitine hydrolase (561 aa).

Positions 1–26 (MTRNQLHNWLNAGFFGLLLLLIHVQG) are cleaved as a signal peptide. The cysteines at positions 97 and 125 are disulfide-linked. Residue Ser230 is the Acyl-ester intermediate of the active site. An intrachain disulfide couples Cys282 to Cys293. Active-site charge relay system residues include Glu347 and His459. The short motif at 558–561 (HREL) is the Prevents secretion from ER element.

Belongs to the type-B carboxylesterase/lipase family. In terms of tissue distribution, detected in liver (at protein level).

It localises to the microsome. It is found in the endoplasmic reticulum. It carries out the reaction an O-acyl-(R)-carnitine + H2O = (R)-carnitine + a fatty acid + H(+). It catalyses the reaction all-trans-retinyl hexadecanoate + H2O = all-trans-retinol + hexadecanoate + H(+). Its function is as follows. Hydrolase with high activity towards palmitoylcarnitine. Is also active with p-nitrophenylacetate and alpha-naphthylacetate. May also hydrolyze retinyl esters. In Mus musculus (Mouse), this protein is Acylcarnitine hydrolase.